The chain runs to 271 residues: ATP-dependent Clp protease proteolytic subunit 6, chloroplastic (271 aa).

Positions 1 to 30 are disordered; that stretch reads MAGLAISPPLGLSFSSRTRNPKPTSFLSHN. The transit peptide at 1–77 directs the protein to the chloroplast; the sequence is MAGLAISPPL…KAPRFGVIEA (77 aa). Residues 13–30 are compositionally biased toward polar residues; it reads SFSSRTRNPKPTSFLSHN. Ser-175 serves as the catalytic Nucleophile. Residue His-200 is part of the active site.

This sequence belongs to the peptidase S14 family. In terms of assembly, component of the chloroplastic Clp protease core complex which consist of at least 16 proteins: CLPP4 (3 copies), CLPP5 (3 copies), CLPR4 (2 copies), ClpP1 (1 copy), CLPP6 (1 copy), CLPR2 (1 copy), CLPT1 (1 copy), CLPT2 (1 copy) and 3 copies of CLPP3 and/or CLPR1 and/or CLPR3. The core complex is organized in two heptameric rings, one containing CLPP3,4,5,6 in a 1:2:3:1 ratio and the other CLPP1 and CLPR1,2,3,4 in a 3:1:1:1:1 ratio. Mostly expressed in leaves. Also detected in stems, and to a lower extent, in roots (at protein level).

The protein localises to the plastid. The protein resides in the chloroplast stroma. It carries out the reaction Hydrolysis of proteins to small peptides in the presence of ATP and magnesium. alpha-casein is the usual test substrate. In the absence of ATP, only oligopeptides shorter than five residues are hydrolyzed (such as succinyl-Leu-Tyr-|-NHMec, and Leu-Tyr-Leu-|-Tyr-Trp, in which cleavage of the -Tyr-|-Leu- and -Tyr-|-Trp bonds also occurs).. Cleaves peptides in various proteins in a process that requires ATP hydrolysis. Has a chymotrypsin-like activity. Plays a major role in the degradation of misfolded proteins. Essential protein required for chloroplast development and integrity. The sequence is that of ATP-dependent Clp protease proteolytic subunit 6, chloroplastic from Arabidopsis thaliana (Mouse-ear cress).